The sequence spans 430 residues: GPI mannosyltransferase 1 (430 aa).

Residues 1–11 lie on the Cytoplasmic side of the membrane; it reads MELQSLIDTVS. The chain crosses the membrane as a helical span at residues 12 to 32; it reads LQKLLLLGALLRLILIAYAFF. Residues 33-72 lie on the Lumenal side of the membrane; the sequence is HDQWFRVKYTDIDYMIVVDGARHMWNGGSPFDRTTFRYTP. A helical membrane pass occupies residues 73–93; sequence LLAALVMPSIWIANPMGKLIF. Topologically, residues 94–115 are cytoplasmic; it reads ASSDLGAAWYCYGVLKSFAKER. The chain crosses the membrane as a helical span at residues 116–136; sequence SAKWMVSLFILFNPIVLSVST. The Lumenal segment spans residues 137-163; that stretch reads RGNSDMLVTFMSLMVLSKFARRKCYQA. The helical transmembrane segment at 164–184 threads the bilayer; that stretch reads AAVLGFAVHFKIYPIIYALPL. The Cytoplasmic portion of the chain corresponds to 185–206; that stretch reads TLGVWEQSVAASTNTWRRVVKT. Residues 207-227 form a helical membrane-spanning segment; sequence AVVVSICALMAAISFAVPTVL. Residues 228-360 are Lumenal-facing; the sequence is CYMKYGQQYL…AFKFFSWVKA (133 aa). A helical membrane pass occupies residues 361-381; it reads LGVVLMWAATIPLWVTTAVPL. The Cytoplasmic portion of the chain corresponds to 382 to 388; the sequence is EFHGYSD. A helical membrane pass occupies residues 389–409; the sequence is FAQLWIVSCLFFLAMVVLASM. The Lumenal portion of the chain corresponds to 410 to 430; sequence LARIAYRVQCTKCSAKSIKVA.

This sequence belongs to the PIGM family.

The protein resides in the endoplasmic reticulum membrane. It functions in the pathway glycolipid biosynthesis; glycosylphosphatidylinositol-anchor biosynthesis. Functionally, mannosyltransferase involved in glycosylphosphatidylinositol-anchor biosynthesis. Transfers the first alpha-1,4-mannose to GlcN-PI during GPI precursor assembly. The polypeptide is GPI mannosyltransferase 1 (PIGM) (Trypanosoma brucei brucei (strain 927/4 GUTat10.1)).